The following is a 102-amino-acid chain: ATP-dependent Clp protease adapter protein ClpS (102 aa).

This sequence belongs to the ClpS family. As to quaternary structure, binds to the N-terminal domain of the chaperone ClpA.

In terms of biological role, involved in the modulation of the specificity of the ClpAP-mediated ATP-dependent protein degradation. This Shewanella baltica (strain OS155 / ATCC BAA-1091) protein is ATP-dependent Clp protease adapter protein ClpS.